The following is a 37-amino-acid chain: Large ribosomal subunit protein bL36 (37 aa).

It belongs to the bacterial ribosomal protein bL36 family.

In Azoarcus sp. (strain BH72), this protein is Large ribosomal subunit protein bL36.